The following is a 323-amino-acid chain: GTP 3',8-cyclase (323 aa).

One can recognise a Radical SAM core domain in the interval 4–228; it reads KYGRSIDYLR…VPVNIQNNGP (225 aa). Arginine 13 is a GTP binding site. Positions 20 and 24 each coordinate [4Fe-4S] cluster. Tyrosine 26 is a binding site for S-adenosyl-L-methionine. [4Fe-4S] cluster is bound at residue cysteine 27. Arginine 63 is a binding site for GTP. Residue glycine 67 participates in S-adenosyl-L-methionine binding. Residue threonine 94 participates in GTP binding. Serine 118 is a binding site for S-adenosyl-L-methionine. Lysine 155 contacts GTP. Position 189 (methionine 189) interacts with S-adenosyl-L-methionine. Residues cysteine 252 and cysteine 255 each coordinate [4Fe-4S] cluster. 257–259 serves as a coordination point for GTP; the sequence is RMR. Cysteine 269 lines the [4Fe-4S] cluster pocket.

The protein belongs to the radical SAM superfamily. MoaA family. In terms of assembly, monomer and homodimer. [4Fe-4S] cluster is required as a cofactor.

It carries out the reaction GTP + AH2 + S-adenosyl-L-methionine = (8S)-3',8-cyclo-7,8-dihydroguanosine 5'-triphosphate + 5'-deoxyadenosine + L-methionine + A + H(+). The protein operates within cofactor biosynthesis; molybdopterin biosynthesis. Functionally, catalyzes the cyclization of GTP to (8S)-3',8-cyclo-7,8-dihydroguanosine 5'-triphosphate. The polypeptide is GTP 3',8-cyclase (Petrotoga mobilis (strain DSM 10674 / SJ95)).